The sequence spans 101 residues: NAD(P)H-quinone oxidoreductase subunit 4L, chloroplastic (101 aa).

The next 3 helical transmembrane spans lie at 2–22 (MFEHVLFLSVYLFSIGIYGLI), 32–52 (ICLELILNSINLNLVTFSDLF), and 61–81 (IFAIFVIALAAAEAAIGLSIL).

The protein belongs to the complex I subunit 4L family. As to quaternary structure, NDH is composed of at least 16 different subunits, 5 of which are encoded in the nucleus.

The protein localises to the plastid. Its subcellular location is the chloroplast thylakoid membrane. The catalysed reaction is a plastoquinone + NADH + (n+1) H(+)(in) = a plastoquinol + NAD(+) + n H(+)(out). It catalyses the reaction a plastoquinone + NADPH + (n+1) H(+)(in) = a plastoquinol + NADP(+) + n H(+)(out). Its function is as follows. NDH shuttles electrons from NAD(P)H:plastoquinone, via FMN and iron-sulfur (Fe-S) centers, to quinones in the photosynthetic chain and possibly in a chloroplast respiratory chain. The immediate electron acceptor for the enzyme in this species is believed to be plastoquinone. Couples the redox reaction to proton translocation, and thus conserves the redox energy in a proton gradient. This Oryza nivara (Indian wild rice) protein is NAD(P)H-quinone oxidoreductase subunit 4L, chloroplastic.